The sequence spans 279 residues: Large ribosomal subunit protein uL2 (279 aa).

Disordered regions lie at residues 1-43 (MGIK…TAGR) and 207-279 (KAGR…PGKH). The span at 8–22 (PTTNGRRNMTASDFS) shows a compositional bias: polar residues. The segment covering 23-33 (EITKTKPEKSL) has biased composition (basic and acidic residues). Residues 34-43 (LDSQSHTAGR) are compositionally biased toward polar residues. 2 stretches are compositionally biased toward basic residues: residues 209–219 (GRTRWQGKRPT) and 254–279 (TLGKKTRNKKARSNKLIVRGRRPGKH).

Belongs to the universal ribosomal protein uL2 family. In terms of assembly, part of the 50S ribosomal subunit. Forms a bridge to the 30S subunit in the 70S ribosome.

Functionally, one of the primary rRNA binding proteins. Required for association of the 30S and 50S subunits to form the 70S ribosome, for tRNA binding and peptide bond formation. It has been suggested to have peptidyltransferase activity; this is somewhat controversial. Makes several contacts with the 16S rRNA in the 70S ribosome. The sequence is that of Large ribosomal subunit protein uL2 from Lactiplantibacillus plantarum (strain ATCC BAA-793 / NCIMB 8826 / WCFS1) (Lactobacillus plantarum).